The primary structure comprises 880 residues: DNA mismatch repair protein MutS (880 aa).

625–632 (GPNMAGKS) is an ATP binding site.

The protein belongs to the DNA mismatch repair MutS family.

Its function is as follows. This protein is involved in the repair of mismatches in DNA. It is possible that it carries out the mismatch recognition step. This protein has a weak ATPase activity. This is DNA mismatch repair protein MutS from Alkaliphilus oremlandii (strain OhILAs) (Clostridium oremlandii (strain OhILAs)).